The chain runs to 501 residues: Zinc finger C3HC-type protein 1 (501 aa).

Ala-2 is subject to N-acetylalanine. Residues 21-73 (VVRSPEGTPQKVRELIDEGIVPEEGGTEPKDTAATFQSVDGSPQAEQSPLEST) form a disordered region. At Ser-24 the chain carries Phosphoserine. Residue Thr-28 is modified to Phosphothreonine. A compositionally biased stretch (polar residues) spans 54-72 (ATFQSVDGSPQAEQSPLES). Phosphoserine is present on residues Ser-58, Ser-62, and Ser-68. Thr-84 carries the post-translational modification Phosphothreonine. Residues 102–156 (CAKYGWVTVECDMLKCSSCQAFLCASLQPTFDFGRYKERCAELKKSLCSAHEKFC) form a C3HC-type zinc finger. The tract at residues 302–421 (SPIPGVEGRP…TSPRSFFDPT (120 aa)) is disordered. 2 positions are modified to phosphoserine: Ser-320 and Ser-328. A compositionally biased stretch (polar residues) spans 326 to 338 (TRSQDATVSPGSE). Position 332 is a phosphothreonine (Thr-332). Residues Ser-334, Ser-337, Ser-343, Ser-353, Ser-358, Ser-369, and Ser-380 each carry the phosphoserine modification. Polar residues-rich tracts occupy residues 350 to 359 (RTRSWESSSP) and 369 to 383 (SPTT…SMGT). A Phosphothreonine modification is found at Thr-383. Residue Ser-394 is modified to Phosphoserine. The Nuclear localization signal motif lies at 395 to 401 (PLRRTKR). 2 positions are modified to phosphoserine: Ser-406 and Ser-482. Over residues 406-420 (SSSSSDTSPRSFFDP) the composition is skewed to low complexity.

Interacts with TPR; this interaction mediates ZC3HC1 nuclear envelopes (NE)-association but also required for proper positioning of a substantial amount of TPR at the nuclear basket (NB). In terms of processing, phosphorylated. May also be weakly phosphorylated on Tyr residues.

The protein resides in the nucleus. The protein localises to the nucleus envelope. Its function is as follows. Required for proper positioning of a substantial amount of TPR at the nuclear basket (NB) through interaction with TPR. The sequence is that of Zinc finger C3HC-type protein 1 (Zc3hc1) from Mus musculus (Mouse).